The following is a 308-amino-acid chain: Growth/differentiation factor 15 (308 aa).

The N-terminal stretch at 1–29 (MPGQELKTLNGSQMLLVLLVLLWPPHGGA) is a signal peptide. A propeptide spanning residues 30 to 192 (VSLAEASRAS…HLRPRASRGR (163 aa)) is cleaved from the precursor. N-linked (GlcNAc...) asparagine glycosylation occurs at N70. The segment at 152-179 (APALHLRLSPPPSQSDQLLVKSSSSRPQ) is disordered. Polar residues predominate over residues 165-178 (QSDQLLVKSSSSRP). Cystine bridges form between C203/C210, C211/C274, C240/C305, and C244/C307.

Belongs to the TGF-beta family. As to quaternary structure, homodimer; disulfide-linked. Interacts with GFRAL and RET; ligand of GFRAL, which mediates GDF15 internalization and cellular signaling through interaction with RET via the formation of a 2:2:2 ternary complex composed of GDF15, GFRAL and RET. As to expression, detected in plasma (at protein level).

It localises to the secreted. Hormone produced in response to various stresses to confer information about those stresses to the brain, and trigger an aversive response, characterized by nausea and/or loss of appetite. The aversive response is both required to reduce continuing exposure to those stresses at the time of exposure and to promote avoidance behavior in the future. Acts by binding to its receptor, GFRAL, activating GFRAL-expressing neurons localized in the area postrema and nucleus tractus solitarius of the brainstem. It then triggers the activation of neurons localized within the parabrachial nucleus and central amygdala, which constitutes part of the 'emergency circuit' that shapes responses to stressful conditions. The GDF15-GFRAL signal induces expression of genes involved in metabolism, such as lipid metabolism in adipose tissues. Required for avoidance behavior in response to food allergens: induced downstream of mast cell activation to promote aversion and minimize harmful effects of exposure to noxious substances. In addition to suppress appetite, also promotes weight loss by enhancing energy expenditure in muscle: acts by increasing calcium futile cycling in muscle. Contributes to the effect of metformin, an anti-diabetic drug, on appetite reduction and weight loss: produced in the kidney in response to metformin treatment, thereby activating the GDF15-GFRAL response, leading to reduced appetite and weight. Produced in response to anticancer drugs, such as camptothecin or cisplatin, promoting nausea and contributing to malnutrition. Overproduced in many cancers, promoting anorexia in cancer (cachexia). Responsible for the risk of nausea during pregnancy: high levels of GDF15 during pregnancy, mostly originating from embryos, are associated with increased nausea. Maternal sensitivity to nausea is probably determined by pre-pregnancy exposure to GDF15, females with naturally high level of GDF15 being less susceptible to nausea than females with low levels of GDF15 before pregnancy. Promotes metabolic adaptation in response to systemic inflammation caused by bacterial and viral infections in order to promote tissue tolerance and prevent tissue damage. Inhibits growth hormone signaling on hepatocytes. The chain is Growth/differentiation factor 15 from Macaca fascicularis (Crab-eating macaque).